The following is a 609-amino-acid chain: UvrABC system protein C (609 aa).

In terms of domain architecture, GIY-YIG spans 22–100 (EKPGVYQYLN…IKKYKPRYNV (79 aa)). The UVR domain maps to 214 to 249 (QDISRMLVEKMQELANEMKFEEAQKIKEKYLLIENY).

The protein belongs to the UvrC family. In terms of assembly, interacts with UvrB in an incision complex.

The protein resides in the cytoplasm. The UvrABC repair system catalyzes the recognition and processing of DNA lesions. UvrC both incises the 5' and 3' sides of the lesion. The N-terminal half is responsible for the 3' incision and the C-terminal half is responsible for the 5' incision. The sequence is that of UvrABC system protein C from Bacteroides thetaiotaomicron (strain ATCC 29148 / DSM 2079 / JCM 5827 / CCUG 10774 / NCTC 10582 / VPI-5482 / E50).